Consider the following 199-residue polypeptide: Replication protein (199 aa).

It belongs to the Gram-positive plasmids replication protein type 2 family.

In terms of biological role, is essential for plasmid replication. Nicks the positive strand at the plus origin of replication. The polypeptide is Replication protein (repF) (Staphylococcus aureus).